A 955-amino-acid chain; its full sequence is Protein translocase subunit SecA (955 aa).

ATP-binding positions include glutamine 87, 105-109 (GEGKT), and aspartate 494. The interval 861–955 (ASPAPAAPRP…KKAPRTKRKR (95 aa)) is disordered. Low complexity predominate over residues 874–888 (QEAAQQAQGTAAPSA). The segment covering 943–955 (SKGKKAPRTKRKR) has biased composition (basic residues).

The protein belongs to the SecA family. Monomer and homodimer. Part of the essential Sec protein translocation apparatus which comprises SecA, SecYEG and auxiliary proteins SecDF. Other proteins may also be involved.

The protein resides in the cell membrane. The protein localises to the cytoplasm. The enzyme catalyses ATP + H2O + cellular proteinSide 1 = ADP + phosphate + cellular proteinSide 2.. Functionally, part of the Sec protein translocase complex. Interacts with the SecYEG preprotein conducting channel. Has a central role in coupling the hydrolysis of ATP to the transfer of proteins into and across the cell membrane, serving as an ATP-driven molecular motor driving the stepwise translocation of polypeptide chains across the membrane. The chain is Protein translocase subunit SecA from Rhodococcus jostii (strain RHA1).